The primary structure comprises 857 residues: MSGRDNRGAGGGGGGHQPLSNAMGKLKEKLTRVGDELGYHRVESNLSTSNTATSLDTILPEDPFLFPQVSPQRHPQNIVRTQLLLEDEPPLSFRPLLEDDDINEPPTQQQQRTPLRASGSLELTPLPPPPTSLEIREHRDRQQRGAQGDDLQRSKQSLKGSRVSFERRDTGNSNTNSNKAAESSDEDSFEEKRTGFQQQKATSVDHKGILKDLKHILANDNRRQFQAKKHVSLDVKGTRFLQDLLKESSSEEEFHKTRREFQGRKHQSLDPRVTFKLDKVLQGSSTDSDEEGEDAEHKRLIHRPKDITKPVIIDLKDLESESDEDFLTSRQHFQQQRSISTDSRKSRRLYEMDEMGNKRGENIRHAVPFVRQITEDGKPKLEVYRPTTNPIYIWTQVLAALSVSLGSLVVGFVSAYTSPALVSMTDRNITSFEVTQDAGSWVGGIMPLAALAGGITGGPLIEYLGRRNTILATAVPFIVSSLLIACAVNVAMVLCGRFLAGFCVGIASLSLPVYLGETVQPEVRGTLGLLPTAFGNIGILLCFVAGSFMNWSMLAFLGAALPVPFLILMFLIPETPRWFVGRGLEERARKALKWLRGKEADVEPELKGLMRSQADADRQASRNTMLELLKLNNLKPLSISLGLMFFQQFSGINAVIFYTVQIFKDAGSTIDGNLCTIIVGIVNFLATFIGIVLIDRAGRKILLYVSDIAMVLTLFVLGGFFYCKANGPDVSHLGWLPLTCFVIYILGFSLGFGPIPWLMMGEILPAKIRGSAASVATAFNWFCTFVVTKTFQDLTVAMGAHGAFWLFGAICFVGLFFVIIYVPETQGKTLEDIERKMMGRVRRMSSVANIKPLSFNM.

Disordered regions lie at residues 1-27 and 92-203; these read MSGR…GKLK and SFRP…KATS. The Cytoplasmic segment spans residues 1–392; that stretch reads MSGRDNRGAG…VYRPTTNPIY (392 aa). Basic and acidic residues predominate over residues 134 to 143; sequence EIREHRDRQQ. Over residues 171–181 the composition is skewed to polar residues; that stretch reads GNSNTNSNKAA. Phosphoserine occurs at positions 248, 249, 250, 320, and 322. The tract at residues 327-346 is disordered; the sequence is LTSRQHFQQQRSISTDSRKS. Polar residues predominate over residues 330 to 341; that stretch reads RQHFQQQRSIST. A helical membrane pass occupies residues 393–413; that stretch reads IWTQVLAALSVSLGSLVVGFV. Residues 414–440 are Extracellular-facing; sequence SAYTSPALVSMTDRNITSFEVTQDAGS. A glycan (N-linked (GlcNAc...) asparagine) is linked at Asn428. A helical transmembrane segment spans residues 441–461; sequence WVGGIMPLAALAGGITGGPLI. Over 462-473 the chain is Cytoplasmic; sequence EYLGRRNTILAT. The helical transmembrane segment at 474-494 threads the bilayer; that stretch reads AVPFIVSSLLIACAVNVAMVL. Over 495 to 497 the chain is Extracellular; that stretch reads CGR. A helical transmembrane segment spans residues 498–518; it reads FLAGFCVGIASLSLPVYLGET. Residues 519-528 lie on the Cytoplasmic side of the membrane; it reads VQPEVRGTLG. A helical transmembrane segment spans residues 529–549; the sequence is LLPTAFGNIGILLCFVAGSFM. Asn550 carries N-linked (GlcNAc...) asparagine glycosylation. Residues 550 to 552 are Extracellular-facing; that stretch reads NWS. A helical membrane pass occupies residues 553–573; it reads MLAFLGAALPVPFLILMFLIP. Residues 574 to 636 lie on the Cytoplasmic side of the membrane; the sequence is ETPRWFVGRG…ELLKLNNLKP (63 aa). Residues 637 to 657 traverse the membrane as a helical segment; that stretch reads LSISLGLMFFQQFSGINAVIF. Residues 658-673 lie on the Extracellular side of the membrane; sequence YTVQIFKDAGSTIDGN. The chain crosses the membrane as a helical span at residues 674-694; that stretch reads LCTIIVGIVNFLATFIGIVLI. Residues 695–700 are Cytoplasmic-facing; it reads DRAGRK. The chain crosses the membrane as a helical span at residues 701–721; it reads ILLYVSDIAMVLTLFVLGGFF. Over 722 to 740 the chain is Extracellular; it reads YCKANGPDVSHLGWLPLTC. The chain crosses the membrane as a helical span at residues 741–761; the sequence is FVIYILGFSLGFGPIPWLMMG. The Cytoplasmic segment spans residues 762–767; the sequence is EILPAK. Residues 768–788 traverse the membrane as a helical segment; that stretch reads IRGSAASVATAFNWFCTFVVT. Topologically, residues 789–801 are extracellular; that stretch reads KTFQDLTVAMGAH. Residues 802-822 traverse the membrane as a helical segment; it reads GAFWLFGAICFVGLFFVIIYV. The Cytoplasmic portion of the chain corresponds to 823–857; the sequence is PETQGKTLEDIERKMMGRVRRMSSVANIKPLSFNM. Phosphoserine is present on residues Ser845 and Ser846.

The protein belongs to the major facilitator superfamily. Sugar transporter (TC 2.A.1.1) family. Trehalose transporter subfamily.

It localises to the cell membrane. Low-capacity facilitative transporter for trehalose. Does not transport maltose, sucrose or lactose. Mediates the bidirectional transfer of trehalose. Responsible for the transport of trehalose synthesized in the fat body and the incorporation of trehalose into other tissues that require a carbon source, thereby regulating trehalose levels in the hemolymph. In Drosophila sechellia (Fruit fly), this protein is Facilitated trehalose transporter Tret1-1.